A 432-amino-acid polypeptide reads, in one-letter code: Zinc finger protein 829 (432 aa).

A KRAB domain is found at 35-106 (VMFRDVSIDF…DRELTRGLCS (72 aa)). The C2H2-type 1 zinc-finger motif lies at 156–178 (WECKICGKTFNQNSQFIQHQRIH). The segment at 184–206 (YESKEYGKSFSRGSLVTRHQRIH) adopts a C2H2-type 2; degenerate zinc-finger fold. 8 C2H2-type zinc fingers span residues 212–234 (YECK…QRIH), 240–262 (YECK…QRIH), 268–290 (YECK…LRIH), 296–318 (YECK…QRMH), 324–346 (YECK…HRIH), 352–374 (YECE…QRIH), 380–402 (YECN…QRIH), and 408–430 (YDCK…EGIH).

Belongs to the krueppel C2H2-type zinc-finger protein family.

The protein localises to the nucleus. Its function is as follows. May be involved in transcriptional regulation. The chain is Zinc finger protein 829 (ZNF829) from Homo sapiens (Human).